Here is a 193-residue protein sequence, read N- to C-terminus: Probable DNA-directed RNA polymerase subunit delta (193 aa).

In terms of domain architecture, HTH HARE-type spans L14–W83. Composition is skewed to acidic residues over residues G117 to N134 and E142 to E193. Positions G117–E193 are disordered.

The protein belongs to the RpoE family. RNAP is composed of a core of 2 alpha, a beta and a beta' subunits. The core is associated with a delta subunit and one of several sigma factors.

Functionally, participates in both the initiation and recycling phases of transcription. In the presence of the delta subunit, RNAP displays an increased specificity of transcription, a decreased affinity for nucleic acids, and an increased efficiency of RNA synthesis because of enhanced recycling. In Streptococcus suis (strain 05ZYH33), this protein is Probable DNA-directed RNA polymerase subunit delta.